A 234-amino-acid polypeptide reads, in one-letter code: Sugar fermentation stimulation protein A (234 aa).

The H-T-H motif DNA-binding region spans 201 to 220; it reads LLSEAQQRGVEILAYKAELS.

It belongs to the SfsA family.

In terms of biological role, binds to DNA non-specifically. Could be a regulatory factor involved in maltose metabolism. This is Sugar fermentation stimulation protein A from Escherichia coli O127:H6 (strain E2348/69 / EPEC).